The following is a 534-amino-acid chain: Nitrate/nitrite transporter NrtP (534 aa).

The next 12 helical transmembrane spans lie at 19–39, 52–72, 79–99, 109–129, 150–170, 195–215, 240–260, 266–286, 382–404, 409–431, 445–465, and 485–505; these read WFAF…ATTI, TIGL…GMLL, LTYS…ATAQ, LLMG…AEWF, AFSA…PGAF, AAIA…YFSV, DFWF…VLAW, NFLN…LYLF, WTMV…VAGT, IAVL…TFAI, GNVG…LLLL, and GFFQ…AFFL.

It belongs to the major facilitator superfamily. Nitrate/nitrite porter (TC 2.A.1.8) family.

The protein localises to the cell inner membrane. In terms of biological role, high-efficiency transport system for both nitrate and nitrite. This Picosynechococcus sp. (strain ATCC 27264 / PCC 7002 / PR-6) (Agmenellum quadruplicatum) protein is Nitrate/nitrite transporter NrtP.